The primary structure comprises 396 residues: Tryptophan synthase beta chain (396 aa).

Lys-88 carries the post-translational modification N6-(pyridoxal phosphate)lysine.

It belongs to the TrpB family. Tetramer of two alpha and two beta chains. It depends on pyridoxal 5'-phosphate as a cofactor.

The catalysed reaction is (1S,2R)-1-C-(indol-3-yl)glycerol 3-phosphate + L-serine = D-glyceraldehyde 3-phosphate + L-tryptophan + H2O. Its pathway is amino-acid biosynthesis; L-tryptophan biosynthesis; L-tryptophan from chorismate: step 5/5. The beta subunit is responsible for the synthesis of L-tryptophan from indole and L-serine. The polypeptide is Tryptophan synthase beta chain (Shewanella sp. (strain W3-18-1)).